Here is a 195-residue protein sequence, read N- to C-terminus: MKLIVGLGNPGAKYRFTRHNAGFMVVDRLAGAAGTTVNRRRCFSLVGEGRLNGVRVVLAKPQTYMNLSGLAVSALCRHYRLELADLLVICDDLDLEFGRIRLRPKGGSGGHRGLASIIAALGSSDFPRVRIGIGKAEDASAHVLGEFAPEDQSGLEEILSTAALAAACACREGLDEAMSRFNSWRLMSANGTAEV.

Position 14 (Tyr-14) interacts with tRNA. His-19 (proton acceptor) is an active-site residue. TRNA is bound by residues Tyr-64 and Asn-66.

Belongs to the PTH family. In terms of assembly, monomer.

Its subcellular location is the cytoplasm. It catalyses the reaction an N-acyl-L-alpha-aminoacyl-tRNA + H2O = an N-acyl-L-amino acid + a tRNA + H(+). Functionally, hydrolyzes ribosome-free peptidyl-tRNAs (with 1 or more amino acids incorporated), which drop off the ribosome during protein synthesis, or as a result of ribosome stalling. Catalyzes the release of premature peptidyl moieties from peptidyl-tRNA molecules trapped in stalled 50S ribosomal subunits, and thus maintains levels of free tRNAs and 50S ribosomes. This is Peptidyl-tRNA hydrolase from Desulforudis audaxviator (strain MP104C).